Consider the following 871-residue polypeptide: Alanine--tRNA ligase (871 aa).

Zn(2+)-binding residues include histidine 561, histidine 565, cysteine 665, and histidine 669.

Belongs to the class-II aminoacyl-tRNA synthetase family. The cofactor is Zn(2+).

The protein resides in the cytoplasm. The catalysed reaction is tRNA(Ala) + L-alanine + ATP = L-alanyl-tRNA(Ala) + AMP + diphosphate. Functionally, catalyzes the attachment of alanine to tRNA(Ala) in a two-step reaction: alanine is first activated by ATP to form Ala-AMP and then transferred to the acceptor end of tRNA(Ala). Also edits incorrectly charged Ser-tRNA(Ala) and Gly-tRNA(Ala) via its editing domain. The polypeptide is Alanine--tRNA ligase (Dehalococcoides mccartyi (strain CBDB1)).